The chain runs to 215 residues: MSENAQLNGLCDRFRGFYPVVIDVETAGFNAKTDALLEIAAITLKMDEHGWLMPDETLHFHVEPFEGANLQPEALAFNGINPHDPQRGAVSEYDALHAIFKMVRKGMKESDCSRAIMVAHNATFDHSFTMTAAERAGLKRNPFHPFVTFDTAALSGLALGQTVLSKACIAAGMPFDGAQAHSALYDTEQTAQLFCEIVNRWKRLGGWPLPVATPE.

The 175-residue stretch at 20-194 folds into the Exonuclease domain; that stretch reads VVIDVETAGF…YDTEQTAQLF (175 aa). Positions 23, 25, 181, and 186 each coordinate Mg(2+). His181 acts as the Proton donor/acceptor in catalysis.

Belongs to the RNase T family. Homodimer. It depends on Mg(2+) as a cofactor.

Its function is as follows. Trims short 3' overhangs of a variety of RNA species, leaving a one or two nucleotide 3' overhang. Responsible for the end-turnover of tRNA: specifically removes the terminal AMP residue from uncharged tRNA (tRNA-C-C-A). Also appears to be involved in tRNA biosynthesis. This chain is Ribonuclease T, found in Klebsiella pneumoniae subsp. pneumoniae (strain ATCC 700721 / MGH 78578).